A 218-amino-acid polypeptide reads, in one-letter code: Small ribosomal subunit protein uS3 (218 aa).

In terms of domain architecture, KH type-2 spans 38-106; the sequence is LRSDLKKKLM…PVHLNIEEVK (69 aa).

This sequence belongs to the universal ribosomal protein uS3 family. Part of the 30S ribosomal subunit. Forms a tight complex with proteins S10 and S14.

In terms of biological role, binds the lower part of the 30S subunit head. Binds mRNA in the 70S ribosome, positioning it for translation. The chain is Small ribosomal subunit protein uS3 from Legionella pneumophila (strain Lens).